Here is a 270-residue protein sequence, read N- to C-terminus: 3-methyl-2-oxobutanoate hydroxymethyltransferase (270 aa).

2 residues coordinate Mg(2+): D48 and D87. 3-methyl-2-oxobutanoate is bound by residues 48–49 (DS), D87, and K117. Residue E119 participates in Mg(2+) binding. E186 serves as the catalytic Proton acceptor.

This sequence belongs to the PanB family. As to quaternary structure, homodecamer; pentamer of dimers. Mg(2+) serves as cofactor.

It is found in the cytoplasm. The enzyme catalyses 3-methyl-2-oxobutanoate + (6R)-5,10-methylene-5,6,7,8-tetrahydrofolate + H2O = 2-dehydropantoate + (6S)-5,6,7,8-tetrahydrofolate. The protein operates within cofactor biosynthesis; (R)-pantothenate biosynthesis; (R)-pantoate from 3-methyl-2-oxobutanoate: step 1/2. Functionally, catalyzes the reversible reaction in which hydroxymethyl group from 5,10-methylenetetrahydrofolate is transferred onto alpha-ketoisovalerate to form ketopantoate. In Synechococcus sp. (strain RCC307), this protein is 3-methyl-2-oxobutanoate hydroxymethyltransferase.